The chain runs to 1122 residues: Histidine kinase CKI1 (1122 aa).

Residues 1 to 12 (MMVKVTKLVASR) are Cytoplasmic-facing. Residues 13 to 33 (PIVVFCVLAFLVVVFECIWIS) traverse the membrane as a helical segment. Residues 34–345 (NWRTTTENLV…KHQAEKAKYQ (312 aa)) lie on the Extracellular side of the membrane. The chain crosses the membrane as a helical span at residues 346–366 (LIVVMIFLGFGWPVWFVWFMM). The Cytoplasmic portion of the chain corresponds to 367–1122 (QATRREMHMR…VIREIESKRH (756 aa)). Residues 402–671 (NASHDIRGAL…CFQFNVLLTT (270 aa)) form the Histidine kinase domain. H405 is subject to Phosphohistidine; by autocatalysis. Basic and acidic residues predominate over residues 918 to 928 (AERSPKHKVQE). Residues 918-981 (AERSPKHKVQ…QETSKPSDDE (64 aa)) form a disordered region. The 134-residue stretch at 987 to 1120 (RVLVVDDNFI…ANVIREIESK (134 aa)) folds into the Response regulatory domain. 4-aspartylphosphate is present on D1050.

In terms of assembly, homodimer. Interacts with AHP2 and AHP3. In terms of tissue distribution, expressed in vascular tissues of inflorescence stems and floral organs, especially in procambium cells, and in siliques.

It is found in the cell membrane. It catalyses the reaction ATP + protein L-histidine = ADP + protein N-phospho-L-histidine.. Functionally, essential protein. Functions as a histidine kinase and transmits the stress signal to a downstream MAPK cascade. This protein undergoes an ATP-dependent autophosphorylation at a conserved histidine residue in the kinase core, and a phosphoryl group is then transferred to a conserved aspartate residue in the receiver domain. Required for the development of megagametophyte in female gametophyte (embryo sac) independently of cytokinin. Contributes to vascular bundle formation and secondary growth in a cytokinin-independent manner, probably by promoting the maintenance of mitotic activity and/or identity of procambial cells. Seems to influence and promote the cytokinin signaling pathway. This Arabidopsis thaliana (Mouse-ear cress) protein is Histidine kinase CKI1 (CKI1).